The sequence spans 177 residues: Putative acetyltransferase FG08082 (177 aa).

The 94-residue stretch at 81–174 (EEWEQVGLVR…VSIAMVEGPG (94 aa)) folds into the N-acetyltransferase domain.

It belongs to the acetyltransferase family.

Its pathway is mycotoxin biosynthesis. Functionally, putative acetyltransferase; part of the gene cluster that mediates the biosynthesis of butenolide, a mycotoxin that shows antibiotic activity but does not seem to play a major role in the spread of head blight in wheat. Butenolide is derived from glutamic acid via a 4-acetamido-2-butenoic acid intermediate. The predicted function of the NADH:flavin oxidoreductase FG08077, the cytochrome P450 monooxygenase FG08079, the decarboxylase FG08083, and the putative acetyltransferase FG08082 are consistent with this pathway, however, the respective activities of the butelonide biosynthesis cluster enzymes have still to be experimentally determined. The protein is Putative acetyltransferase FG08082 of Gibberella zeae (strain ATCC MYA-4620 / CBS 123657 / FGSC 9075 / NRRL 31084 / PH-1) (Wheat head blight fungus).